A 214-amino-acid chain; its full sequence is Inner membrane-spanning protein YciB (214 aa).

The next 5 helical transmembrane spans lie at 11–31, 50–70, 81–101, 119–139, and 149–169; these read ILFF…VAII, MHII…ILQD, VNWG…KPII, LSYM…YVAY, and FKLF…GVYI.

Belongs to the YciB family.

It localises to the cell inner membrane. Plays a role in cell envelope biogenesis, maintenance of cell envelope integrity and membrane homeostasis. The polypeptide is Inner membrane-spanning protein YciB (Hydrogenovibrio crunogenus (strain DSM 25203 / XCL-2) (Thiomicrospira crunogena)).